Reading from the N-terminus, the 272-residue chain is MDSLVESGWKYLVTHFSDFQLACIGSFILHESVFFLSGLPYIFLERTGFLSNYKIQTKSNTPEAQGKCIARLLLYHCCVNLPLMMASYPVFRFMGMESSFPLPSWKVVSAQILFYFIIEDFVFYWGHRILHTKWLYKNVHSVHHEYATPFGLTSEYAHPAEILFLGFATIVGPALTGPHLITLWLWMMLRVIETVEAHCGYHFPWSPSNFLPLYGGSLILMWESFAYSADFHDYHHRLLYTKSGNYSSTFVYMDWIFGTDKGYRKLKALKET.

3 helical membrane passes run 24 to 44 (IGSF…YIFL), 72 to 94 (LLLY…FRFM), and 107 to 127 (VVSA…YWGH). The Fatty acid hydroxylase domain occupies 113–259 (LFYFIIEDFV…FVYMDWIFGT (147 aa)). Positions 127–131 (HRILH) match the Histidine box-1 motif. The short motif at 140 to 144 (HSVHH) is the Histidine box-2 element. 2 helical membrane-spanning segments follow: residues 162 to 182 (ILFL…HLIT) and 209 to 229 (NFLP…AYSA). Residues 231–237 (FHDYHHR) carry the Histidine box-3 motif.

Belongs to the sterol desaturase family. Fe cation serves as cofactor. As to expression, strongly expressed in leaves, flowers, siliques and developing seeds.

It localises to the endoplasmic reticulum membrane. The catalysed reaction is 4,4-dimethyl-5alpha-cholest-7-en-3beta-ol + 6 Fe(II)-[cytochrome b5] + 3 O2 + 5 H(+) = 4alpha-carboxy-4beta-methyl-5alpha-cholest-7-ene-3beta-ol + 6 Fe(III)-[cytochrome b5] + 4 H2O. It carries out the reaction 24-methylidenelophenol + 6 Fe(II)-[cytochrome b5] + 3 O2 + 5 H(+) = 4alpha-carboxy-ergosta-7,24(24(1))-dien-3beta-ol + 6 Fe(III)-[cytochrome b5] + 4 H2O. Functionally, non-heme iron oxygenase involved in sterols biosynthesis by catalyzing the removal of the second methyl group at the C-4 position. 24-ethylidenelophenol and 24-ethyllophenol are the preferred substrates. Together with SMO2-2, required during embryogenesis, probably by maintaining sterols and auxin homeostasis. The chain is Methylsterol monooxygenase 2-1 from Arabidopsis thaliana (Mouse-ear cress).